The following is a 130-amino-acid chain: uncharacterized protein (130 aa).

The segment at 1–34 is disordered; it reads MTAVGGSPPTRRCPATEDRAPATVATPSSTDPTA.

The protein to M.tuberculosis Rv1583c.

This is an uncharacterized protein from Mycobacterium tuberculosis (strain CDC 1551 / Oshkosh).